The primary structure comprises 261 residues: 5'-nucleotidase SurE (261 aa).

Residues Asp17, Asp18, Ser48, and Asn104 each contribute to the a divalent metal cation site.

It belongs to the SurE nucleotidase family. The cofactor is a divalent metal cation.

Its subcellular location is the cytoplasm. The enzyme catalyses a ribonucleoside 5'-phosphate + H2O = a ribonucleoside + phosphate. Its function is as follows. Nucleotidase that shows phosphatase activity on nucleoside 5'-monophosphates. The protein is 5'-nucleotidase SurE of Deinococcus geothermalis (strain DSM 11300 / CIP 105573 / AG-3a).